The following is a 275-amino-acid chain: F420-dependent methylenetetrahydromethanopterin dehydrogenase (275 aa).

The protein belongs to the MTD family.

It carries out the reaction 5,10-methylenetetrahydromethanopterin + oxidized coenzyme F420-(gamma-L-Glu)(n) + 2 H(+) = 5,10-methenyl-5,6,7,8-tetrahydromethanopterin + reduced coenzyme F420-(gamma-L-Glu)(n). Its pathway is one-carbon metabolism; methanogenesis from CO(2); 5,10-methylene-5,6,7,8-tetrahydromethanopterin from 5,10-methenyl-5,6,7,8-tetrahydromethanopterin (coenzyme F420 route): step 1/1. In terms of biological role, catalyzes the reversible reduction of methenyl-H(4)MPT(+) to methylene-H(4)MPT. This is F420-dependent methylenetetrahydromethanopterin dehydrogenase from Methanobrevibacter smithii (strain ATCC 35061 / DSM 861 / OCM 144 / PS).